We begin with the raw amino-acid sequence, 411 residues long: ACT domain-containing protein ACR9 (411 aa).

ACT domains follow at residues 22–105, 111–194, and 243–322; these read VVTV…NVSK, LLKF…LAGP, and LLQI…VIIV.

Its function is as follows. May bind amino acids. This Arabidopsis thaliana (Mouse-ear cress) protein is ACT domain-containing protein ACR9.